The primary structure comprises 356 residues: NADH-quinone oxidoreductase subunit H (356 aa).

8 consecutive transmembrane segments (helical) span residues 18-38 (IVMI…IAYI), 87-107 (GVFL…WAVI), 120-140 (VGIL…IMAG), 166-186 (IGFV…SAVV), 205-225 (ILNW…VSAL), 265-285 (AITT…LPPI), 292-312 (WVPG…LIAM), and 333-353 (FLPL…FAGI).

Belongs to the complex I subunit 1 family. As to quaternary structure, NDH-1 is composed of 14 different subunits. Subunits NuoA, H, J, K, L, M, N constitute the membrane sector of the complex.

The protein resides in the cell inner membrane. It carries out the reaction a quinone + NADH + 5 H(+)(in) = a quinol + NAD(+) + 4 H(+)(out). NDH-1 shuttles electrons from NADH, via FMN and iron-sulfur (Fe-S) centers, to quinones in the respiratory chain. The immediate electron acceptor for the enzyme in this species is believed to be ubiquinone. Couples the redox reaction to proton translocation (for every two electrons transferred, four hydrogen ions are translocated across the cytoplasmic membrane), and thus conserves the redox energy in a proton gradient. This subunit may bind ubiquinone. This Bradyrhizobium sp. (strain BTAi1 / ATCC BAA-1182) protein is NADH-quinone oxidoreductase subunit H.